The following is a 282-amino-acid chain: Putative lactoylglutathione lyase (282 aa).

An N-acetylalanine modification is found at A2. VOC domains follow at residues 17 to 141 (RFLH…LIQR) and 147 to 274 (PLCQ…LVDN). H20 is a Zn(2+) binding site. Residue R24 participates in substrate binding. E71 contacts Zn(2+). Positions 75 and 89 each coordinate substrate. Zn(2+)-binding residues include H89 and E137. The active-site Proton donor/acceptor is E137. 254 to 255 (LG) is a binding site for substrate.

Belongs to the glyoxalase I family. Zn(2+) is required as a cofactor.

The catalysed reaction is (R)-S-lactoylglutathione = methylglyoxal + glutathione. It participates in secondary metabolite metabolism; methylglyoxal degradation; (R)-lactate from methylglyoxal: step 1/2. Its function is as follows. Catalyzes the conversion of hemimercaptal, formed from methylglyoxal and glutathione, to S-lactoylglutathione. This is Putative lactoylglutathione lyase from Brassica oleracea var. gemmifera (Brussel sprouts).